The following is a 355-amino-acid chain: Protein RecA (355 aa).

65-72 (GPESSGKT) lines the ATP pocket.

The protein belongs to the RecA family.

It localises to the cytoplasm. Its function is as follows. Can catalyze the hydrolysis of ATP in the presence of single-stranded DNA, the ATP-dependent uptake of single-stranded DNA by duplex DNA, and the ATP-dependent hybridization of homologous single-stranded DNAs. It interacts with LexA causing its activation and leading to its autocatalytic cleavage. This Pseudomonas putida (strain W619) protein is Protein RecA.